A 179-amino-acid chain; its full sequence is Natural killer cells antigen CD94 (179 aa).

The Cytoplasmic portion of the chain corresponds to 1–10 (MAVFKTTLWR). Residues 11–31 (LISGTLGIICLSLMATLGILL) traverse the membrane as a helical; Signal-anchor for type II membrane protein segment. Residues 32-179 (KNSFTKLSVE…NRYICKQQLI (148 aa)) lie on the Extracellular side of the membrane. Cystine bridges form between Cys-58–Cys-70 and Cys-61–Cys-72. One can recognise a C-type lectin domain in the interval 68–175 (YRCNCYFISS…CETKNRYICK (108 aa)). 2 N-linked (GlcNAc...) asparagine glycosylation sites follow: Asn-83 and Asn-132. 2 disulfide bridges follow: Cys-89/Cys-174 and Cys-152/Cys-166.

Can form disulfide-bonded heterodimer with NKG2 family members KLRC1 and KLRC2. KLRD1-KLRC1 heterodimer interacts with peptide-bound MHC-E-B2M heterotrimeric complex. KLRD1 plays a prominent role in directly interacting with MHC-E. KLRD1-KLRC1 interacts with much higher affinity with peptide-bound MHC-E-B2M than KLRD1-KLRC2. Interacts with the adapter protein TYROBP/DAP12; this interaction is required for cell surface expression and cell activation. As to expression, natural killer cells.

It is found in the cell membrane. In terms of biological role, immune receptor involved in self-nonself discrimination. In complex with KLRC1 or KLRC2 on cytotoxic and regulatory lymphocyte subsets, recognizes non-classical major histocompatibility (MHC) class Ib molecule MHC-E loaded with self-peptides derived from the signal sequence of classical MHC class Ia and non-classical MHC class Ib molecules. Enables cytotoxic cells to monitor the expression of MHC class I molecules in healthy cells and to tolerate self. Primarily functions as a ligand binding subunit as it lacks the capacity to signal. KLRD1-KLRC1 acts as an immune inhibitory receptor. Key inhibitory receptor on natural killer (NK) cells that regulates their activation and effector functions. Dominantly counteracts T cell receptor signaling on a subset of memory/effector CD8-positive T cells as part of an antigen-driven response to avoid autoimmunity. On intraepithelial CD8-positive gamma-delta regulatory T cells triggers TGFB1 secretion, which in turn limits the cytotoxic programming of intraepithelial CD8-positive alpha-beta T cells, distinguishing harmless from pathogenic antigens. In MHC-E-rich tumor microenvironment, acts as an immune inhibitory checkpoint and may contribute to progressive loss of effector functions of NK cells and tumor-specific T cells, a state known as cell exhaustion. Upon MHC-E-peptide binding, transmits intracellular signals through KLRC1 immunoreceptor tyrosine-based inhibition motifs (ITIMs) by recruiting INPP5D/SHIP-1 and INPPL1/SHIP-2 tyrosine phosphatases to ITIMs, and ultimately opposing signals transmitted by activating receptors through dephosphorylation of proximal signaling molecules. Functionally, KLRD1-KLRC2 acts as an immune activating receptor. On cytotoxic lymphocyte subsets recognizes MHC-E loaded with signal sequence-derived peptides from non-classical MHC class Ib MHC-G molecules, likely playing a role in the generation and effector functions of adaptive NK cells and in maternal-fetal tolerance during pregnancy. Regulates the effector functions of terminally differentiated cytotoxic lymphocyte subsets, and in particular may play a role in adaptive NK cell response to viral infection. Upon MHC-E-peptide binding, transmits intracellular signals via the adapter protein TYROBP/DAP12, triggering the phosphorylation of proximal signaling molecules and cell activation. The sequence is that of Natural killer cells antigen CD94 (KLRD1) from Macaca mulatta (Rhesus macaque).